A 111-amino-acid polypeptide reads, in one-letter code: Rhodanese domain-containing protein CG4456 (111 aa).

The 99-residue stretch at 12-110 folds into the Rhodanese domain; it reads NHPDVYLIDV…SWNEWAQKEG (99 aa).

This chain is Rhodanese domain-containing protein CG4456, found in Drosophila melanogaster (Fruit fly).